Here is a 343-residue protein sequence, read N- to C-terminus: 7-epi-alpha-eudesmol synthase ((2E,6E)-farnesyl diphosphate cyclizing) (343 aa).

Residues D80 and D84 each contribute to the Mg(2+) site. The DDXXD motif signature appears at 80–84 (DDQFD). R177 contacts substrate. 2 residues coordinate Mg(2+): N223 and S227. R230 lines the substrate pocket. A Mg(2+)-binding site is contributed by E231. A substrate-binding site is contributed by 317 to 318 (RY).

Belongs to the terpene synthase family. Requires Mg(2+) as cofactor.

The catalysed reaction is (2E,6E)-farnesyl diphosphate + H2O = 7-epi-alpha-eudesmol + diphosphate. It participates in secondary metabolite biosynthesis; terpenoid biosynthesis. Catalyzes the conversion of (2E,6E)-farnesyl diphosphate (FPP) to yield the bicyclic sesquiterpenol 7-epi-alpha-eudesmol via a 1,10-cyclization, which requires the abstraction of the pyrophosphate from FPP to yield the (E,E)-germacradienyl cation. The only accepted substrate is (2E,6E)-farnesyl diphosphate (FPP). This Streptomyces viridochromogenes (strain DSM 40736 / JCM 4977 / BCRC 1201 / Tue 494) protein is 7-epi-alpha-eudesmol synthase ((2E,6E)-farnesyl diphosphate cyclizing).